The chain runs to 358 residues: MSIQVENIRKAFGDFVALNDISLNFPGGELVALLGPSGCGKTTLLRIIAGLEQADAGRVLLDGQDASATHVRERQVGFVFQHYALFRHMTVFDNVAFGLRMKPRRERPSEAEIARKVHALLDLVQLDWLADRLPAQLSGGQRQRIALARALAVEPRVLLLDEPFGALDAKVRKELRRWLRKLHDELHITSLFVTHDQEEALEVADRVVLMNHGKVEQIGSPAEVYSQPASAFVYGFLGSANRIRGVSATGAVAVGGQTLAADHQLPHGQPVEAFIRPHELAILPEHGAGLPARVQRVLTLGGLSRIELEGRDELAGQSFDAELPADAPLLAELAVGQAVRLQARAARVFAADPQGGEA.

In terms of domain architecture, ABC transporter spans 3 to 237 (IQVENIRKAF…PASAFVYGFL (235 aa)). 35–42 (GPSGCGKT) provides a ligand contact to ATP.

Belongs to the ABC transporter superfamily. Sulfate/tungstate importer (TC 3.A.1.6) family. The complex is composed of two ATP-binding proteins (CysA), two transmembrane proteins (CysT and CysW) and a solute-binding protein (CysP).

Its subcellular location is the cell inner membrane. The catalysed reaction is sulfate(out) + ATP + H2O = sulfate(in) + ADP + phosphate + H(+). It carries out the reaction thiosulfate(out) + ATP + H2O = thiosulfate(in) + ADP + phosphate + H(+). Its function is as follows. Part of the ABC transporter complex CysAWTP involved in sulfate/thiosulfate import. Responsible for energy coupling to the transport system. The sequence is that of Sulfate/thiosulfate import ATP-binding protein CysA 1 from Chromobacterium violaceum (strain ATCC 12472 / DSM 30191 / JCM 1249 / CCUG 213 / NBRC 12614 / NCIMB 9131 / NCTC 9757 / MK).